Here is a 209-residue protein sequence, read N- to C-terminus: Small ribosomal subunit protein uS4 (209 aa).

In terms of domain architecture, S4 RNA-binding spans 98-164 (RRLDNVVYRL…LPIKNAIELN (67 aa)).

This sequence belongs to the universal ribosomal protein uS4 family. Part of the 30S ribosomal subunit. Contacts protein S5. The interaction surface between S4 and S5 is involved in control of translational fidelity.

In terms of biological role, one of the primary rRNA binding proteins, it binds directly to 16S rRNA where it nucleates assembly of the body of the 30S subunit. Functionally, with S5 and S12 plays an important role in translational accuracy. The protein is Small ribosomal subunit protein uS4 of Thermosipho melanesiensis (strain DSM 12029 / CIP 104789 / BI429).